A 235-amino-acid chain; its full sequence is Ubiquinone/menaquinone biosynthesis C-methyltransferase UbiE (235 aa).

Residues Thr60, Asp80, 106–107 (DV), and Ser123 contribute to the S-adenosyl-L-methionine site.

Belongs to the class I-like SAM-binding methyltransferase superfamily. MenG/UbiE family.

It catalyses the reaction a 2-demethylmenaquinol + S-adenosyl-L-methionine = a menaquinol + S-adenosyl-L-homocysteine + H(+). It carries out the reaction a 2-methoxy-6-(all-trans-polyprenyl)benzene-1,4-diol + S-adenosyl-L-methionine = a 5-methoxy-2-methyl-3-(all-trans-polyprenyl)benzene-1,4-diol + S-adenosyl-L-homocysteine + H(+). It participates in quinol/quinone metabolism; menaquinone biosynthesis; menaquinol from 1,4-dihydroxy-2-naphthoate: step 2/2. Its pathway is cofactor biosynthesis; ubiquinone biosynthesis. Its function is as follows. Methyltransferase required for the conversion of demethylmenaquinol (DMKH2) to menaquinol (MKH2) and the conversion of 2-polyprenyl-6-methoxy-1,4-benzoquinol (DDMQH2) to 2-polyprenyl-3-methyl-6-methoxy-1,4-benzoquinol (DMQH2). The polypeptide is Ubiquinone/menaquinone biosynthesis C-methyltransferase UbiE (Bdellovibrio bacteriovorus (strain ATCC 15356 / DSM 50701 / NCIMB 9529 / HD100)).